The following is a 390-amino-acid chain: MKIRQVRALTVTGGGADYHDQAEDHWIDDHVATPMAKYPEYRASRQAFGINVLGTLVVEVEAEDGTVGVGVTTAGEPGAYIVEKHLARFVEGASVTDVEKIWDQMFNATLYYGRKGLVLNAISAVDLALYDLLGKIRQEPVYALLGGPVRDELQCYATTGRPDVAKELGFLGGKMTLQHGPAEGVEGLHANIERLRKMREQVGPDFWLMFDCWMALDVEYATRLAHAAAEYDLKWLEEALIPDDYWGYGELRRRMPSTMLMTTGEHEHTRYGFRLLLEMGRPDIIQPDVNWCGGITELIKISALADAHGAMVVPHGSSVYSYHFVITRHNSPFTEFLMMHPQATEVVPMFSPLLLDEPVPVGGRLRLPETPGFGVRLNPEVELRRPYDHD.

Residues His19 and Arg45 each coordinate substrate. Residues Asp211, Glu237, and Glu265 each contribute to the Mg(2+) site. Residue His315 is the Proton acceptor of the active site. Glu335 contacts substrate.

This sequence belongs to the mandelate racemase/muconate lactonizing enzyme family. RhamD subfamily. Mg(2+) serves as cofactor.

It catalyses the reaction L-rhamnonate = 2-dehydro-3-deoxy-L-rhamnonate + H2O. Its function is as follows. Catalyzes the dehydration of L-rhamnonate to 2-keto-3-deoxy-L-rhamnonate (KDR). The protein is L-rhamnonate dehydratase of Saccharopolyspora erythraea (strain ATCC 11635 / DSM 40517 / JCM 4748 / NBRC 13426 / NCIMB 8594 / NRRL 2338).